The chain runs to 673 residues: Cyclic nucleotide-binding domain-containing protein 2 (673 aa).

Positions 1–15 (MNRSANPEAASSTSH) are enriched in polar residues. Residues 1–89 (MNRSANPEAA…PQPKDRPGVQ (89 aa)) form a disordered region. Over residues 43-86 (PADKSDTTESKSESGSDSRSEEDKESPASIKEIKAETPQPKDRP) the composition is skewed to basic and acidic residues. Position 206 to 329 (206 to 329 (CYRSYTESLQ…ETQYRYNFFR (124 aa))) interacts with a nucleoside 3',5'-cyclic phosphate.

Testis-specific. Exclusively expressed in testicular germ cells while it is not present in mature sperm (at protein level).

It is found in the cytoplasm. Its subcellular location is the cytosol. Essential for male fertility. Plays an important role in spermatogenesis and regulates sperm motility by controlling the development of the flagellar bending of sperm. This chain is Cyclic nucleotide-binding domain-containing protein 2 (Cnbd2), found in Mus musculus (Mouse).